Reading from the N-terminus, the 295-residue chain is Tetrahydromethanopterin S-methyltransferase subunit E (295 aa).

The next 7 membrane-spanning stretches (helical) occupy residues Met4 to Ala24, Gly60 to Met80, Val87 to Val107, Gly140 to Gly160, Phe161 to Ile181, Tyr234 to Thr254, and Ile255 to Ile275.

It belongs to the MtrE family. In terms of assembly, the complex is composed of 8 subunits; MtrA, MtrB, MtrC, MtrD, MtrE, MtrF, MtrG and MtrH.

It localises to the cell membrane. It catalyses the reaction 5-methyl-5,6,7,8-tetrahydromethanopterin + coenzyme M + 2 Na(+)(in) = 5,6,7,8-tetrahydromethanopterin + methyl-coenzyme M + 2 Na(+)(out). Its pathway is one-carbon metabolism; methanogenesis from CO(2); methyl-coenzyme M from 5,10-methylene-5,6,7,8-tetrahydromethanopterin: step 2/2. Part of a complex that catalyzes the formation of methyl-coenzyme M and tetrahydromethanopterin from coenzyme M and methyl-tetrahydromethanopterin. This is an energy-conserving, sodium-ion translocating step. In Methanothermobacter marburgensis (strain ATCC BAA-927 / DSM 2133 / JCM 14651 / NBRC 100331 / OCM 82 / Marburg) (Methanobacterium thermoautotrophicum), this protein is Tetrahydromethanopterin S-methyltransferase subunit E.